Reading from the N-terminus, the 172-residue chain is Trypsin inhibitor 1B (172 aa).

Cystine bridges form between Cys-40/Cys-84 and Cys-133/Cys-139.

Belongs to the protease inhibitor I3 (leguminous Kunitz-type inhibitor) family.

In terms of biological role, WTI-1B inhibits trypsin stoichiometrically. The polypeptide is Trypsin inhibitor 1B (Psophocarpus tetragonolobus (Winged bean)).